We begin with the raw amino-acid sequence, 515 residues long: NADH-ubiquinone oxidoreductase chain 2 (515 aa).

Transmembrane regions (helical) follow at residues tryptophan 63–serine 83, valine 250–alanine 270, phenylalanine 299–isoleucine 319, alanine 356–cysteine 376, and phenylalanine 379–valine 399.

It belongs to the complex I subunit 2 family.

The protein resides in the mitochondrion inner membrane. It catalyses the reaction a ubiquinone + NADH + 5 H(+)(in) = a ubiquinol + NAD(+) + 4 H(+)(out). In terms of biological role, core subunit of the mitochondrial membrane respiratory chain NADH dehydrogenase (Complex I) that is believed to belong to the minimal assembly required for catalysis. Complex I functions in the transfer of electrons from NADH to the respiratory chain. The immediate electron acceptor for the enzyme is believed to be ubiquinone. The sequence is that of NADH-ubiquinone oxidoreductase chain 2 (ND2) from Beta vulgaris (Sugar beet).